A 246-amino-acid polypeptide reads, in one-letter code: Uridylate kinase (246 aa).

ATP is bound at residue 18 to 21; that stretch reads KVSG. Gly60 provides a ligand contact to UMP. Residues Gly61 and Arg65 each coordinate ATP. UMP is bound by residues Asp80 and 141 to 148; that span reads TGNPFFTT. ATP-binding residues include Thr168, Gln169, Tyr174, and Asp177.

It belongs to the UMP kinase family. Homohexamer.

Its subcellular location is the cytoplasm. It carries out the reaction UMP + ATP = UDP + ADP. It participates in pyrimidine metabolism; CTP biosynthesis via de novo pathway; UDP from UMP (UMPK route): step 1/1. Its activity is regulated as follows. Inhibited by UTP. Functionally, catalyzes the reversible phosphorylation of UMP to UDP. This Granulibacter bethesdensis (strain ATCC BAA-1260 / CGDNIH1) protein is Uridylate kinase.